The following is a 462-amino-acid chain: Fumarate hydratase class II (462 aa).

Substrate-binding positions include 97-99, 127-130, 137-139, and threonine 185; these read SGT, HPND, and SSN. The active-site Proton donor/acceptor is histidine 186. Serine 316 is a catalytic residue. Residues serine 317 and 322 to 324 each bind substrate; that span reads KVN.

It belongs to the class-II fumarase/aspartase family. Fumarase subfamily. Homotetramer.

The protein localises to the cytoplasm. It catalyses the reaction (S)-malate = fumarate + H2O. It participates in carbohydrate metabolism; tricarboxylic acid cycle; (S)-malate from fumarate: step 1/1. Functionally, involved in the TCA cycle. Catalyzes the stereospecific interconversion of fumarate to L-malate. This chain is Fumarate hydratase class II, found in Bacillus anthracis.